The primary structure comprises 389 residues: Alanine racemase 1 (389 aa).

Residue Lys-41 is the Proton acceptor; specific for D-alanine of the active site. An N6-(pyridoxal phosphate)lysine modification is found at Lys-41. Arg-137 contacts substrate. The active-site Proton acceptor; specific for L-alanine is the Tyr-266. Position 313 (Met-313) interacts with substrate.

It belongs to the alanine racemase family. It depends on pyridoxal 5'-phosphate as a cofactor.

It catalyses the reaction L-alanine = D-alanine. The protein operates within amino-acid biosynthesis; D-alanine biosynthesis; D-alanine from L-alanine: step 1/1. Its function is as follows. Catalyzes the interconversion of L-alanine and D-alanine. May also act on other amino acids. The sequence is that of Alanine racemase 1 (alr1) from Bacillus subtilis (strain 168).